The sequence spans 81 residues: Large ribosomal subunit protein uL23 (81 aa).

The protein belongs to the universal ribosomal protein uL23 family. In terms of assembly, part of the 50S ribosomal subunit. Contacts protein L29.

In terms of biological role, binds to 23S rRNA. One of the proteins that surrounds the polypeptide exit tunnel on the outside of the ribosome. The sequence is that of Large ribosomal subunit protein uL23 from Saccharolobus solfataricus (strain ATCC 35092 / DSM 1617 / JCM 11322 / P2) (Sulfolobus solfataricus).